The sequence spans 736 residues: Polyribonucleotide nucleotidyltransferase (736 aa).

Aspartate 493 and aspartate 499 together coordinate Mg(2+). The KH domain occupies 560 to 619 (PQHAELVVNPDAIRMIIGPGGKNIKQITTVTGAAIDINDSGKISIFAPTSEAMEQAKQMI). Residues 629–703 (GKNYKGKVRK…SRKAVLLEEE (75 aa)) form the S1 motif domain. Residues 710–736 (EESSRFSKGNRNGDRSRHNNRERTRRT) form a disordered region. Basic and acidic residues predominate over residues 720–736 (RNGDRSRHNNRERTRRT).

Belongs to the polyribonucleotide nucleotidyltransferase family. Requires Mg(2+) as cofactor.

The protein localises to the cytoplasm. It catalyses the reaction RNA(n+1) + phosphate = RNA(n) + a ribonucleoside 5'-diphosphate. In terms of biological role, involved in mRNA degradation. Catalyzes the phosphorolysis of single-stranded polyribonucleotides processively in the 3'- to 5'-direction. The polypeptide is Polyribonucleotide nucleotidyltransferase (Lawsonia intracellularis (strain PHE/MN1-00)).